The primary structure comprises 830 residues: ABC transporter G family member STR (830 aa).

The Cytoplasmic segment spans residues Met1–Pro551. One can recognise an ABC transporter domain in the interval Leu46–Asp297. ATP is bound at residue Gly90 to Ser97. Disordered regions lie at residues Asp333 to Lys356, Ser368 to Ser422, and Ser471 to Pro491. Positions Ser368–Gln378 are enriched in polar residues. A compositionally biased stretch (acidic residues) spans Asp395–Phe405. Low complexity predominate over residues Ser471 to Thr483. Residues Glu552–Phe572 form a helical membrane-spanning segment. Residues Lys573 to Asn588 are Extracellular-facing. A helical membrane pass occupies residues Phe589–Ile609. Residues Gln610 to Val630 lie on the Cytoplasmic side of the membrane. The chain crosses the membrane as a helical span at residues Ile631–Ile651. Residues Thr652–Ser661 are Extracellular-facing. Residue Asn659 is glycosylated (N-linked (GlcNAc...) asparagine). Residues Ile662–Leu682 traverse the membrane as a helical segment. Over Val683–Tyr690 the chain is Cytoplasmic. Residues Ile691–Phe711 traverse the membrane as a helical segment. The Extracellular portion of the chain corresponds to Leu712 to Asn798. 2 N-linked (GlcNAc...) asparagine glycosylation sites follow: Asn771 and Asn780. Residues Ile799–Val819 traverse the membrane as a helical segment. The Cytoplasmic segment spans residues Val820 to Lys830.

Belongs to the ABC transporter superfamily. ABCG family. Stunted arbuscule (STR) subfamily. In terms of assembly, heterodimerizes with STR2; the resulting transporter is located in the peri-arbuscular membrane.

The protein resides in the cell membrane. Together with STR2, required for arbuscule development in arbuscular mycorrhizal (AM) symbiosis. In Petunia hybrida (Petunia), this protein is ABC transporter G family member STR.